Reading from the N-terminus, the 269-residue chain is Hydroxyethylthiazole kinase (269 aa).

Methionine 45 contacts substrate. Positions 121 and 167 each coordinate ATP. A substrate-binding site is contributed by glycine 194.

The protein belongs to the Thz kinase family. Requires Mg(2+) as cofactor.

The catalysed reaction is 5-(2-hydroxyethyl)-4-methylthiazole + ATP = 4-methyl-5-(2-phosphooxyethyl)-thiazole + ADP + H(+). The protein operates within cofactor biosynthesis; thiamine diphosphate biosynthesis; 4-methyl-5-(2-phosphoethyl)-thiazole from 5-(2-hydroxyethyl)-4-methylthiazole: step 1/1. Its function is as follows. Catalyzes the phosphorylation of the hydroxyl group of 4-methyl-5-beta-hydroxyethylthiazole (THZ). The protein is Hydroxyethylthiazole kinase of Geobacillus sp. (strain WCH70).